The sequence spans 431 residues: F-box protein pof14 (431 aa).

The region spanning 172–186 (CPDEILQLIFSYCYD) is the F-box; atypical domain.

Component of the E3 ubiquitin ligase Skp1-Cullin-1-F-box (SCF) complex. Interacts with skp1, cul1 and erg9.

It is found in the cytoplasm. It localises to the nucleus. The protein localises to the endoplasmic reticulum. Functionally, expression is induced during oxidative stress. Plays an essential, SCF-independent, role in the stress response to hydrogen peroxide for survival, by negatively regulating ergosterol synthesis via direct binding to the squalene synthase erg9. In Schizosaccharomyces pombe (strain 972 / ATCC 24843) (Fission yeast), this protein is F-box protein pof14 (pof14).